We begin with the raw amino-acid sequence, 82 residues long: MAADRAQNLQDTFLNHVRKTKTPLTIFLVNGVKLQGIVTWFDNFCLLLRRDGHSQLVYKHAISTIMPGAPIQLFEGGEDAPA.

In terms of domain architecture, Sm spans 11-71; the sequence is DTFLNHVRKT…ISTIMPGAPI (61 aa).

The protein belongs to the Hfq family. Homohexamer.

In terms of biological role, RNA chaperone that binds small regulatory RNA (sRNAs) and mRNAs to facilitate mRNA translational regulation in response to envelope stress, environmental stress and changes in metabolite concentrations. Also binds with high specificity to tRNAs. The chain is RNA-binding protein Hfq from Rhodopseudomonas palustris (strain BisA53).